The sequence spans 601 residues: Elongation factor 4 (601 aa).

Residues S7–K189 enclose the tr-type G domain. GTP is bound by residues D19–T24 and N136–D139.

The protein belongs to the TRAFAC class translation factor GTPase superfamily. Classic translation factor GTPase family. LepA subfamily.

Its subcellular location is the cell inner membrane. The enzyme catalyses GTP + H2O = GDP + phosphate + H(+). Required for accurate and efficient protein synthesis under certain stress conditions. May act as a fidelity factor of the translation reaction, by catalyzing a one-codon backward translocation of tRNAs on improperly translocated ribosomes. Back-translocation proceeds from a post-translocation (POST) complex to a pre-translocation (PRE) complex, thus giving elongation factor G a second chance to translocate the tRNAs correctly. Binds to ribosomes in a GTP-dependent manner. The protein is Elongation factor 4 of Afipia carboxidovorans (strain ATCC 49405 / DSM 1227 / KCTC 32145 / OM5) (Oligotropha carboxidovorans).